We begin with the raw amino-acid sequence, 529 residues long: Glucose-6-phosphate isomerase (529 aa).

The active-site Proton donor is E323. Active-site residues include H352 and K456.

It belongs to the GPI family.

Its subcellular location is the cytoplasm. The catalysed reaction is alpha-D-glucose 6-phosphate = beta-D-fructose 6-phosphate. It functions in the pathway carbohydrate biosynthesis; gluconeogenesis. The protein operates within carbohydrate degradation; glycolysis; D-glyceraldehyde 3-phosphate and glycerone phosphate from D-glucose: step 2/4. In terms of biological role, catalyzes the reversible isomerization of glucose-6-phosphate to fructose-6-phosphate. The protein is Glucose-6-phosphate isomerase of Geobacter sulfurreducens (strain ATCC 51573 / DSM 12127 / PCA).